We begin with the raw amino-acid sequence, 92 residues long: Signal recognition particle 19 kDa protein (92 aa).

The protein belongs to the SRP19 family. In terms of assembly, part of the signal recognition particle protein translocation system, which is composed of SRP and FtsY. Archaeal SRP consists of a 7S RNA molecule of 300 nucleotides and two protein subunits: SRP54 and SRP19.

Its subcellular location is the cytoplasm. Its function is as follows. Involved in targeting and insertion of nascent membrane proteins into the cytoplasmic membrane. Binds directly to 7S RNA and mediates binding of the 54 kDa subunit of the SRP. The polypeptide is Signal recognition particle 19 kDa protein (Methanosphaera stadtmanae (strain ATCC 43021 / DSM 3091 / JCM 11832 / MCB-3)).